Reading from the N-terminus, the 624-residue chain is Histone-lysine N-methyltransferase, H3 lysine-9 specific SUVH4 (624 aa).

Disordered stretches follow at residues 1–25 (MAGKRKRANAPDQTERRSSVRVQKV) and 54–86 (DDTELHEKEEENVDGSPKRRSPPKLTAMQKGKQ). The 154-residue stretch at 149 to 302 (GDLPGIDVGH…FTVYKYRLKR (154 aa)) folds into the YDG domain. Positions 381-443 (TGCNCRGSCT…KCVNRTSQKR (63 aa)) constitute a Pre-SET domain. Residues cysteine 383, cysteine 385, cysteine 389, cysteine 395, cysteine 397, cysteine 425, cysteine 429, cysteine 431, and cysteine 435 each contribute to the Zn(2+) site. The 149-residue stretch at 446-594 (FNLEVFRSAK…PMQELTYDYG (149 aa)) folds into the SET domain. S-adenosyl-L-methionine is bound by residues 456 to 458 (KGW), tyrosine 493, arginine 548, and 551 to 552 (NH). Zn(2+)-binding residues include cysteine 554, cysteine 612, cysteine 614, and cysteine 619. The region spanning 608-624 (KQLACYCGALNCRKRLY) is the Post-SET domain.

This sequence belongs to the class V-like SAM-binding methyltransferase superfamily. Histone-lysine methyltransferase family. Suvar3-9 subfamily. In terms of assembly, interacts with H3 histone. In terms of tissue distribution, expressed in leaves stems and flowers.

Its subcellular location is the nucleus. It is found in the chromosome. The protein localises to the centromere. The catalysed reaction is N(6)-methyl-L-lysyl(9)-[histone H3] + S-adenosyl-L-methionine = N(6),N(6)-dimethyl-L-lysyl(9)-[histone H3] + S-adenosyl-L-homocysteine + H(+). It carries out the reaction L-lysyl(9)-[histone H3] + S-adenosyl-L-methionine = N(6)-methyl-L-lysyl(9)-[histone H3] + S-adenosyl-L-homocysteine + H(+). In terms of biological role, histone methyltransferase. Methylates 'Lys-9' of histone H3. H3 'Lys-9' methylation represents a specific tag for epigenetic transcriptional repression. The silencing mechanism via DNA CpNpG methylation requires the targeting of chromomethylase CMT3 to methylated histones, probably through an interaction with an HP1-like adapter. By its function, KYP is directly required for the maintenance of the DNA CpNpG and asymmetric methylation. Involved in the silencing of transposable elements. The protein is Histone-lysine N-methyltransferase, H3 lysine-9 specific SUVH4 (SUVH4) of Arabidopsis thaliana (Mouse-ear cress).